The following is a 228-amino-acid chain: 7-cyano-7-deazaguanine synthase (228 aa).

Residue 9-19 (LSGGPDSTTVL) coordinates ATP. Cys193, Cys203, Cys206, and Cys209 together coordinate Zn(2+).

This sequence belongs to the QueC family. Requires Zn(2+) as cofactor.

It carries out the reaction 7-carboxy-7-deazaguanine + NH4(+) + ATP = 7-cyano-7-deazaguanine + ADP + phosphate + H2O + H(+). The protein operates within purine metabolism; 7-cyano-7-deazaguanine biosynthesis. Functionally, catalyzes the ATP-dependent conversion of 7-carboxy-7-deazaguanine (CDG) to 7-cyano-7-deazaguanine (preQ(0)). The polypeptide is 7-cyano-7-deazaguanine synthase (Rickettsia peacockii (strain Rustic)).